The primary structure comprises 492 residues: Fumarate hydratase 1, mitochondrial (492 aa).

The transit peptide at 1–28 (MSIYVASRRLSGGTTVTALRYATSLRSY) directs the protein to the mitochondrion. Substrate is bound by residues 127–129 (SGT), 157–160 (HPND), 167–169 (SSN), and T215. The active-site Proton donor/acceptor is H216. S346 is an active-site residue. Substrate-binding positions include S347 and 352-354 (KVN).

This sequence belongs to the class-II fumarase/aspartase family. Fumarase subfamily. In terms of assembly, homotetramer.

The protein localises to the mitochondrion. It carries out the reaction (S)-malate = fumarate + H2O. It functions in the pathway carbohydrate metabolism; tricarboxylic acid cycle; (S)-malate from fumarate: step 1/1. Its activity is regulated as follows. Fumarate hydratase activity (fumarate to L-malate) is strongly inhibited by phosphoenolpyruvate, citrate, oxaloacetate, ATP and ADP. Malate dehydratase activity (malate to fumarate) is activated by oxaloacetate, pyruvate, Asn and Gln. Malate dehydratase activity (malate to fumarate) is inhibited by citrate, succinate, ADP, ATP, glucose-6P and phosphoenolpyruvate. Its function is as follows. Catalyzes the reversible stereospecific interconversion of fumarate to L-malate. Catalyzes the hydration of fumarate to L-malate in the tricarboxylic acid (TCA) cycle to facilitate a transition step in the production of energy in the form of NADH. In Arabidopsis thaliana (Mouse-ear cress), this protein is Fumarate hydratase 1, mitochondrial.